Consider the following 585-residue polypeptide: Arginine--tRNA ligase (585 aa).

The short motif at 126–136 is the 'HIGH' region element; the sequence is PNIAKEMHVGH.

This sequence belongs to the class-I aminoacyl-tRNA synthetase family. Monomer.

Its subcellular location is the cytoplasm. The catalysed reaction is tRNA(Arg) + L-arginine + ATP = L-arginyl-tRNA(Arg) + AMP + diphosphate. This is Arginine--tRNA ligase from Crocosphaera subtropica (strain ATCC 51142 / BH68) (Cyanothece sp. (strain ATCC 51142)).